Reading from the N-terminus, the 185-residue chain is piRNA-mediated silencing protein C19orf84 homolog (185 aa).

2 disordered regions span residues 1 to 38 and 93 to 185; these read MDELEDGALSNGDNLSLPSAGTESWPTSATPGLPPSLL and HIWP…EADY. Residues 11–25 are compositionally biased toward polar residues; it reads NGDNLSLPSAGTESW. A compositionally biased stretch (low complexity) spans 26-38; that stretch reads PTSATPGLPPSLL. Basic residues predominate over residues 118 to 130; it reads RPSRGWGRGRGRG. Residues 139-150 show a composition bias toward basic and acidic residues; the sequence is GPERAEERERNM.

In terms of assembly, interacts with SPOCD1.

Its subcellular location is the nucleus. It is found in the nucleoplasm. In terms of biological role, protein adapter involved in piRNA-directed transposon methylation by connecting PIWIL4-piRNA and DNA methylation machineries. The PIWIL4-piRNA pathway plays a central role during spermatogenesis by directing transposon DNA methylation and silencing, thereby preventing their mobilization, which is essential for the germline integrity. In Mus musculus (Mouse), this protein is piRNA-mediated silencing protein C19orf84 homolog.